Consider the following 354-residue polypeptide: Homoserine O-succinyltransferase (354 aa).

Cysteine 146 serves as the catalytic Acyl-thioester intermediate. The substrate site is built by lysine 167 and serine 196. The Proton acceptor role is filled by histidine 239. Glutamate 241 is a catalytic residue. A substrate-binding site is contributed by arginine 253.

This sequence belongs to the MetA family.

The protein resides in the cytoplasm. The enzyme catalyses L-homoserine + succinyl-CoA = O-succinyl-L-homoserine + CoA. Its pathway is amino-acid biosynthesis; L-methionine biosynthesis via de novo pathway; O-succinyl-L-homoserine from L-homoserine: step 1/1. In terms of biological role, transfers a succinyl group from succinyl-CoA to L-homoserine, forming succinyl-L-homoserine. This Methylobacter tundripaludum (strain ATCC BAA-1195 / DSM 17260 / SV96) protein is Homoserine O-succinyltransferase.